A 299-amino-acid chain; its full sequence is MNGILNILKPPGMTSHDVVSVVRKKLNMKKVGHTGTLDPNAAGVLPICIGQATKISQFLLDGKKKYRAELTLGIETNTEDIDGEILRQREVTSSPDEIREAVLSFIGEYKQIPPMYSAIKIKGKKLYELARQGVEIERAERTVTIYHIEIIEIFKEKVIFDVLCSKGTYIRTLCKDIGEVLGCGGVMSFLLRTASSDFSLDTAITIEELQALENVEDILLPMDYPLQHMSKAIVKSAYSKQVLNGNRIYSNYLIDTIHEPIGQEVCVYLEKEFVGFGIVRNEDHNQKYIKILRLLFEKE.

D38 functions as the Nucleophile in the catalytic mechanism.

Belongs to the pseudouridine synthase TruB family. Type 1 subfamily.

It carries out the reaction uridine(55) in tRNA = pseudouridine(55) in tRNA. Functionally, responsible for synthesis of pseudouridine from uracil-55 in the psi GC loop of transfer RNAs. In Alkaliphilus oremlandii (strain OhILAs) (Clostridium oremlandii (strain OhILAs)), this protein is tRNA pseudouridine synthase B.